Consider the following 297-residue polypeptide: Probable DNA polymerase III subunit delta (297 aa).

The protein belongs to the DNA polymerase HolA subunit family. In terms of assembly, component of the DNA clamp loading complex consisting of tau(3):delta(1):delta'(1). The DNA polymerase III holoenzyme complex contains at least 10 different subunits organized into 3 functionally essential subassemblies: the Pol III core, the beta sliding clamp processivity factor and the clamp-loading complex. The Pol III core (subunits alpha, epsilon and theta) contains the polymerase and the 3'-5' exonuclease proofreading activities. The polymerase is tethered to the template via the dimeric beta sliding clamp processivity factor. The DNA clamp-loading complex assembles the beta sliding clamp onto the primed template and plays a central role in the organization and communication at the replication fork.

The enzyme catalyses DNA(n) + a 2'-deoxyribonucleoside 5'-triphosphate = DNA(n+1) + diphosphate. Part of the beta sliding clamp loading complex, which hydrolyzes ATP to load the beta clamp onto primed DNA to form the DNA replication pre-initiation complex. DNA polymerase III is a complex, multichain enzyme responsible for most of the replicative synthesis in bacteria. This DNA polymerase also exhibits 3'-5' exonuclease activity. The delta subunit is the wrench that will open the beta subunit dimer. The DNA clamp loading complex (tau(3),delta,delta') is thought to load beta dimers onto DNA by binding ATP which alters the complex's conformation so it can bind beta sliding clamp dimers and open them at one interface. Primed DNA is recognized, ATP is hydrolyzed releasing the clamp loading complex and closing the beta sliding clamp ring around the primed DNA. The polypeptide is Probable DNA polymerase III subunit delta (Mycoplasma genitalium (strain ATCC 33530 / DSM 19775 / NCTC 10195 / G37) (Mycoplasmoides genitalium)).